Consider the following 291-residue polypeptide: HTH-type transcriptional regulator DgcR (291 aa).

The HTH lysR-type domain occupies 1 to 58 (MRLRHIEVFHAIYTTGSITNAAKALHVSQPSVSKVLSHAEMQLGFKLFERVKGRLIPT). A DNA-binding region (H-T-H motif) is located at residues 18–37 (ITNAAKALHVSQPSVSKVLS).

It belongs to the LysR transcriptional regulatory family.

In terms of biological role, transcriptional regulator that positively regulates the expression of the D-Glu gene cluster (DGC). The cluster includes dgcN and dgcA, which are involved in a deamination-independent D-glutamate degradation pathway, dgcR itself, dgcT, dgcP and dgcH. Acts by binding the consensus sequence upstream of dgcR, dgcT, dgcP and dgcH. In Pseudoalteromonas sp, this protein is HTH-type transcriptional regulator DgcR.